Reading from the N-terminus, the 282-residue chain is Putative 4-diphosphocytidyl-2-C-methyl-D-erythritol kinase (282 aa).

Lysine 10 is a catalytic residue. 94-104 (PICAGLGGGSS) is an ATP binding site. Aspartate 136 is a catalytic residue.

Belongs to the GHMP kinase family. IspE subfamily.

The catalysed reaction is 4-CDP-2-C-methyl-D-erythritol + ATP = 4-CDP-2-C-methyl-D-erythritol 2-phosphate + ADP + H(+). Catalyzes the phosphorylation of the position 2 hydroxy group of 4-diphosphocytidyl-2C-methyl-D-erythritol. The protein is Putative 4-diphosphocytidyl-2-C-methyl-D-erythritol kinase (ipk) of Streptococcus mutans serotype c (strain ATCC 700610 / UA159).